Here is a 367-residue protein sequence, read N- to C-terminus: UDP-N-acetylglucosamine--N-acetylmuramyl-(pentapeptide) pyrophosphoryl-undecaprenol N-acetylglucosamine transferase (367 aa).

UDP-N-acetyl-alpha-D-glucosamine-binding positions include 15-17 (TGG), Asn127, Arg163, Ser191, Ile249, and Gln294.

Belongs to the glycosyltransferase 28 family. MurG subfamily.

The protein localises to the cell inner membrane. It catalyses the reaction di-trans,octa-cis-undecaprenyl diphospho-N-acetyl-alpha-D-muramoyl-L-alanyl-D-glutamyl-meso-2,6-diaminopimeloyl-D-alanyl-D-alanine + UDP-N-acetyl-alpha-D-glucosamine = di-trans,octa-cis-undecaprenyl diphospho-[N-acetyl-alpha-D-glucosaminyl-(1-&gt;4)]-N-acetyl-alpha-D-muramoyl-L-alanyl-D-glutamyl-meso-2,6-diaminopimeloyl-D-alanyl-D-alanine + UDP + H(+). It functions in the pathway cell wall biogenesis; peptidoglycan biosynthesis. In terms of biological role, cell wall formation. Catalyzes the transfer of a GlcNAc subunit on undecaprenyl-pyrophosphoryl-MurNAc-pentapeptide (lipid intermediate I) to form undecaprenyl-pyrophosphoryl-MurNAc-(pentapeptide)GlcNAc (lipid intermediate II). The chain is UDP-N-acetylglucosamine--N-acetylmuramyl-(pentapeptide) pyrophosphoryl-undecaprenol N-acetylglucosamine transferase from Burkholderia cenocepacia (strain ATCC BAA-245 / DSM 16553 / LMG 16656 / NCTC 13227 / J2315 / CF5610) (Burkholderia cepacia (strain J2315)).